A 609-amino-acid polypeptide reads, in one-letter code: Arginine--tRNA ligase (609 aa).

Residues 132 to 142 carry the 'HIGH' region motif; it reads ANPTSSLHVGH.

It belongs to the class-I aminoacyl-tRNA synthetase family. As to quaternary structure, monomer.

Its subcellular location is the cytoplasm. It catalyses the reaction tRNA(Arg) + L-arginine + ATP = L-arginyl-tRNA(Arg) + AMP + diphosphate. This chain is Arginine--tRNA ligase, found in Psychrobacter cryohalolentis (strain ATCC BAA-1226 / DSM 17306 / VKM B-2378 / K5).